Consider the following 86-residue polypeptide: Small ribosomal subunit protein bS16 (86 aa).

It belongs to the bacterial ribosomal protein bS16 family.

This Legionella pneumophila (strain Paris) protein is Small ribosomal subunit protein bS16.